We begin with the raw amino-acid sequence, 426 residues long: Dihydroorotase (426 aa).

Zn(2+) contacts are provided by H58 and H60. Substrate-binding positions include H60–R62 and N92. Zn(2+) is bound by residues D150, H177, and H230. N276 contacts substrate. Residue D303 participates in Zn(2+) binding. D303 is a catalytic residue. Substrate contacts are provided by residues H307 and F321–G322.

Belongs to the metallo-dependent hydrolases superfamily. DHOase family. Class I DHOase subfamily. Zn(2+) is required as a cofactor.

It catalyses the reaction (S)-dihydroorotate + H2O = N-carbamoyl-L-aspartate + H(+). The protein operates within pyrimidine metabolism; UMP biosynthesis via de novo pathway; (S)-dihydroorotate from bicarbonate: step 3/3. Functionally, catalyzes the reversible cyclization of carbamoyl aspartate to dihydroorotate. The protein is Dihydroorotase of Listeria innocua serovar 6a (strain ATCC BAA-680 / CLIP 11262).